The primary structure comprises 353 residues: Uroporphyrinogen decarboxylase (353 aa).

Substrate-binding positions include 27–31, phenylalanine 46, aspartate 76, tyrosine 152, serine 207, and histidine 321; that span reads RQAGR.

This sequence belongs to the uroporphyrinogen decarboxylase family. Homodimer.

The protein resides in the cytoplasm. It catalyses the reaction uroporphyrinogen III + 4 H(+) = coproporphyrinogen III + 4 CO2. It functions in the pathway porphyrin-containing compound metabolism; protoporphyrin-IX biosynthesis; coproporphyrinogen-III from 5-aminolevulinate: step 4/4. Functionally, catalyzes the decarboxylation of four acetate groups of uroporphyrinogen-III to yield coproporphyrinogen-III. The protein is Uroporphyrinogen decarboxylase of Listeria monocytogenes serotype 4b (strain F2365).